We begin with the raw amino-acid sequence, 392 residues long: 2,3-bisphosphoglycerate-independent phosphoglycerate mutase (392 aa).

Belongs to the BPG-independent phosphoglycerate mutase family. A-PGAM subfamily.

It carries out the reaction (2R)-2-phosphoglycerate = (2R)-3-phosphoglycerate. It functions in the pathway carbohydrate degradation; glycolysis; pyruvate from D-glyceraldehyde 3-phosphate: step 3/5. In terms of biological role, catalyzes the interconversion of 2-phosphoglycerate and 3-phosphoglycerate. This Methanothrix thermoacetophila (strain DSM 6194 / JCM 14653 / NBRC 101360 / PT) (Methanosaeta thermophila) protein is 2,3-bisphosphoglycerate-independent phosphoglycerate mutase.